Here is a 137-residue protein sequence, read N- to C-terminus: Small ribosomal subunit protein bS6 (137 aa).

Residues 104–137 (SLVNKANNKPEPKPTKAKKEDVAPEAKEQAQTEA) form a disordered region. Positions 111 to 137 (NKPEPKPTKAKKEDVAPEAKEQAQTEA) are enriched in basic and acidic residues.

Belongs to the bacterial ribosomal protein bS6 family.

Binds together with bS18 to 16S ribosomal RNA. The chain is Small ribosomal subunit protein bS6 from Helicobacter hepaticus (strain ATCC 51449 / 3B1).